The primary structure comprises 339 residues: Anthranilate phosphoribosyltransferase (339 aa).

5-phospho-alpha-D-ribose 1-diphosphate-binding positions include Gly-79, 82–83 (GD), Thr-87, 89–92 (NIST), 107–115 (KHGNRAVSS), and Ser-119. An anthranilate-binding site is contributed by Gly-79. Mg(2+) is bound at residue Ser-91. Anthranilate is bound at residue Asn-110. Arg-165 is a binding site for anthranilate. Positions 224 and 225 each coordinate Mg(2+).

The protein belongs to the anthranilate phosphoribosyltransferase family. Homodimer. Mg(2+) is required as a cofactor.

The enzyme catalyses N-(5-phospho-beta-D-ribosyl)anthranilate + diphosphate = 5-phospho-alpha-D-ribose 1-diphosphate + anthranilate. It participates in amino-acid biosynthesis; L-tryptophan biosynthesis; L-tryptophan from chorismate: step 2/5. Catalyzes the transfer of the phosphoribosyl group of 5-phosphorylribose-1-pyrophosphate (PRPP) to anthranilate to yield N-(5'-phosphoribosyl)-anthranilate (PRA). The chain is Anthranilate phosphoribosyltransferase from Geobacillus thermodenitrificans (strain NG80-2).